Consider the following 57-residue polypeptide: Toxin GhoT (57 aa).

2 helical membrane-spanning segments follow: residues 7–27 (ILIFYVIGVNISFVIIWFISH) and 37–57 (AFLVGITWPMSLPVALLFSLF).

The protein belongs to the GhoT/OrtT toxin family.

It localises to the cell inner membrane. In terms of biological role, toxic component of a type V toxin-antitoxin (TA) system. Causes membrane damage when induced by MqsR, slowing cell growth and leading to the formation of dormant persister cells; involved with GhoS, its antitoxin, in reducing cell growth during antibacterial stress. Its toxic effects are neutralized by GhoS, which digests ghoT transcripts in a sequence-specific manner. The sequence is that of Toxin GhoT from Escherichia coli O157:H7.